A 487-amino-acid chain; its full sequence is UDP-N-acetylmuramate--L-alanine ligase (487 aa).

Residue 124–130 coordinates ATP; the sequence is GTHGKTT.

Belongs to the MurCDEF family.

It localises to the cytoplasm. It catalyses the reaction UDP-N-acetyl-alpha-D-muramate + L-alanine + ATP = UDP-N-acetyl-alpha-D-muramoyl-L-alanine + ADP + phosphate + H(+). Its pathway is cell wall biogenesis; peptidoglycan biosynthesis. Cell wall formation. The chain is UDP-N-acetylmuramate--L-alanine ligase from Acaryochloris marina (strain MBIC 11017).